The following is a 123-amino-acid chain: Aberrant microtubules protein 1 (123 aa).

Its function is as follows. Required for normal microtubule organization. The chain is Aberrant microtubules protein 1 (ABM1) from Saccharomyces cerevisiae (strain ATCC 204508 / S288c) (Baker's yeast).